A 174-amino-acid chain; its full sequence is MSKEEVLLNEEIDFKEVRCVSDNGEVYGIISSKEALNLAHKAGLDLVLISPNAKPPVCKIMDYGKFRYQAEKKQKEARKKQKQIEIKEIKLSTQIAQNDINYKVKHAIEFLESGKHVKFKVFLKQRELNIPDAGMDTLGKVAVMLEDIAIAEKEPKLEGKHLNVLYVPKKKEKH.

This sequence belongs to the IF-3 family. As to quaternary structure, monomer.

The protein localises to the cytoplasm. In terms of biological role, IF-3 binds to the 30S ribosomal subunit and shifts the equilibrium between 70S ribosomes and their 50S and 30S subunits in favor of the free subunits, thus enhancing the availability of 30S subunits on which protein synthesis initiation begins. The protein is Translation initiation factor IF-3 of Helicobacter hepaticus (strain ATCC 51449 / 3B1).